The chain runs to 759 residues: Rho GTPase-activating protein 26 (759 aa).

Residues 7–262 (EFSDCYLDSP…MKENPHEHLA (256 aa)) form the BAR domain. The PH domain occupies 265–369 (PYTMEGYLYV…WMEAMDGREP (105 aa)). The Rho-GAP domain maps to 383–568 (AQLDNIGFSI…IIIENYEKMF (186 aa)). Residues 578–701 (NSQLHLSRKR…STSSDSSPVS (124 aa)) form a disordered region. A compositionally biased stretch (basic and acidic residues) spans 608-617 (HNTEKEEKRN). Positions 618 to 637 (SVNSSAESVSSSNANSSANS) are enriched in low complexity. Over residues 638–650 (TCTQCSNMNNLNA) the composition is skewed to polar residues. The segment covering 679-701 (PMFSAPSSPMPTSSTSSDSSPVS) has biased composition (low complexity). The SH3 domain occupies 701–759 (SVPRKAKALYACKAEHDSELSFSAGTVFDNVYPSQEPGWLEGILNGKTGLIPENYVEFL).

The protein localises to the cell junction. It localises to the focal adhesion. It is found in the cytoplasm. Its subcellular location is the cytoskeleton. The protein resides in the endosome membrane. GTPase-activating protein for rhoa and cdc42. The protein is Rho GTPase-activating protein 26 (arhgap26) of Xenopus tropicalis (Western clawed frog).